A 95-amino-acid chain; its full sequence is Neutrophil antibiotic peptide NP-5 (95 aa).

Residues 1 to 19 (MRTLALLAAILLVTLQAQA) form the signal peptide. Residues 20–62 (ELHSGMADDGVDQQQPRAQDLDVAVYIKQDETSPLEVLGAKAG) constitute a propeptide that is removed on maturation. Cystine bridges form between Cys-65–Cys-93, Cys-67–Cys-82, and Cys-72–Cys-92.

The protein belongs to the alpha-defensin family.

Its subcellular location is the secreted. Its function is as follows. Microbicidal activity. The protein is Neutrophil antibiotic peptide NP-5 of Oryctolagus cuniculus (Rabbit).